Reading from the N-terminus, the 249-residue chain is MELPLPGLWLKRLWVLFQVALHVAMGKVLMTLFPGRVKQDILAMSQKTGMAKNPHFSHENWIPTFFSAQYFWFVLKVRWQRLEDKTEEGGLAPNCPVVSLSGQRCHIWDFMQGNRPLVLNFGSCTUPSFIFKFDQFKRLIEDFSSIADFLIIYIEEAHASDGWAFKNNVDIKNHQNLQDRLRAAHLLLDRSPQCPVVVDTMKNQSSRLYAALPERLYVLQAGRILYKGKPGPWNYHPEEVRAVLEKLHS.

Residues 1–12 (MELPLPGLWLKR) are Extracellular-facing. The chain crosses the membrane as a helical; Signal-anchor for type III membrane protein span at residues 13–33 (LWVLFQVALHVAMGKVLMTLF). The Cytoplasmic portion of the chain corresponds to 34–249 (PGRVKQDILA…VRAVLEKLHS (216 aa)). Selenocysteine 126 is a catalytic residue. A non-standard amino acid (selenocysteine) is located at residue selenocysteine 126.

This sequence belongs to the iodothyronine deiodinase family. In terms of assembly, predominantly monomer. Can form homodimers but homodimerization is not essential for enzyme activity.

It localises to the cell membrane. The protein localises to the endoplasmic reticulum membrane. The protein resides in the basolateral cell membrane. The enzyme catalyses 3,3',5-triiodo-L-thyronine + iodide + A + H(+) = L-thyroxine + AH2. The catalysed reaction is 3,3',5'-triiodo-L-thyronine + iodide + A + H(+) = L-thyroxine + AH2. It carries out the reaction 3,3'-diiodo-L-thyronine + iodide + A + H(+) = 3,3',5'-triiodo-L-thyronine + AH2. It catalyses the reaction 3,3'-diiodo-L-thyronine + iodide + A + H(+) = 3,3',5-triiodo-L-thyronine + AH2. The enzyme catalyses 3'-iodo-L-thyronine + iodide + A + H(+) = 3',5'-diiodo-L-thyronine + AH2. The catalysed reaction is 3-iodo-L-thyronine + iodide + A + H(+) = 3,5-diiodo-L-thyronine + AH2. It carries out the reaction 3-iodo-L-thyronine + iodide + A + H(+) = 3,3'-diiodo-L-thyronine + AH2. It catalyses the reaction 3,3'-diiodothyronamine + iodide + A + H(+) = 3,3',5'-triiodothyronamine + AH2. The enzyme catalyses 3'-iodothyronamine + iodide + A + H(+) = 3',5'-diiodothyronamine + AH2. The catalysed reaction is 3-iodothyronamine + iodide + A + H(+) = 3,3'-diiodothyronamine + AH2. It carries out the reaction 3,3'-diiodothyronamine + iodide + A + H(+) = 3,3',5-triiodothyronamine + AH2. It catalyses the reaction 3-iodothyronamine + iodide + A + H(+) = 3,5-diiodothyronamine + AH2. The enzyme catalyses 3,3'-diiodo-L-thyronine sulfate + iodide + A + H(+) = 3,3',5'-triiodo-L-thyronine sulfate + AH2. The catalysed reaction is 3,3',5'-triiodo-L-thyronine sulfate + iodide + A + H(+) = L-thyroxine sulfate + AH2. It carries out the reaction 3,3'-diiodo-L-thyronine sulfate + iodide + A + H(+) = 3,3',5-triiodo-L-thyronine sulfate + AH2. Its function is as follows. Plays a crucial role in the metabolism of thyroid hormones (TH) and has specific roles in TH activation and inactivation by deiodination. Catalyzes the deiodination of L-thyroxine (T4) to 3,5,3'-triiodothyronine (T3) and 3,3',5'-triiodothyronine (rT3) to 3,3'-diiodothyronine (3,3'-T2) via outer-ring deiodination (ORD). Catalyzes the deiodination of T4 to rT3, T3 to 3,3'-T2, 3,5-diiodothyronine (3,5-T2) to 3-monoiodothyronine (3-T1) and 3,3'-T2 to 3-T1 via inner-ring deiodination (IRD). Catalyzes the deiodination of 3',5'-diiodothyronine (3',5'-T2) to 3'-monoiodothyronine (3'-T1) via ORD. Catalyzes the phenolic ring deiodinations of 3,3',5'-triiodothyronamine, 3',5'-diiodothyronamine and 3,3'-diiodothyronamine as well as tyrosyl ring deiodinations of 3,5,3'-triiodothyronamine and 3,5-diiodothyronamine. Catalyzes the deiodination of L-thyroxine sulfate and 3,3',5-triiodo-L-thyronine sulfate via IRD and of 3,3',5'-triiodo-L-thyronine sulfate via ORD. The polypeptide is Type I iodothyronine deiodinase (DIO1) (Sus scrofa (Pig)).